An 89-amino-acid polypeptide reads, in one-letter code: MEANMQENIREGEDKRKGRSFYRKKVCRFCAQKVKIDYKEPDALRRFITERGKILPRRITGTCAKHQRKLAVEIKRARAVALLPFVMNE.

The protein belongs to the bacterial ribosomal protein bS18 family. Part of the 30S ribosomal subunit. Forms a tight heterodimer with protein bS6.

In terms of biological role, binds as a heterodimer with protein bS6 to the central domain of the 16S rRNA, where it helps stabilize the platform of the 30S subunit. This Treponema denticola (strain ATCC 35405 / DSM 14222 / CIP 103919 / JCM 8153 / KCTC 15104) protein is Small ribosomal subunit protein bS18.